Reading from the N-terminus, the 343-residue chain is L-threonine 3-dehydrogenase (343 aa).

Cys-40 contacts Zn(2+). Residues Thr-42 and His-45 each act as charge relay system in the active site. Zn(2+)-binding residues include His-65, Glu-66, Cys-95, Cys-98, Cys-101, and Cys-109. NAD(+) is bound by residues Ile-177, Asp-197, Arg-202, 264 to 266 (LGI), and 288 to 289 (IY).

It belongs to the zinc-containing alcohol dehydrogenase family. In terms of assembly, homotetramer. Requires Zn(2+) as cofactor.

Its subcellular location is the cytoplasm. It carries out the reaction L-threonine + NAD(+) = (2S)-2-amino-3-oxobutanoate + NADH + H(+). Its pathway is amino-acid degradation; L-threonine degradation via oxydo-reductase pathway; glycine from L-threonine: step 1/2. Its function is as follows. Catalyzes the NAD(+)-dependent oxidation of L-threonine to 2-amino-3-ketobutyrate. The protein is L-threonine 3-dehydrogenase of Aliivibrio fischeri (strain MJ11) (Vibrio fischeri).